The following is a 37-amino-acid chain: Large ribosomal subunit protein bL36 (37 aa).

Belongs to the bacterial ribosomal protein bL36 family.

This chain is Large ribosomal subunit protein bL36, found in Ureaplasma parvum serovar 3 (strain ATCC 27815 / 27 / NCTC 11736).